The sequence spans 131 residues: Ribosome-binding factor A (131 aa).

It belongs to the RbfA family. As to quaternary structure, monomer. Binds 30S ribosomal subunits, but not 50S ribosomal subunits or 70S ribosomes.

Its subcellular location is the cytoplasm. Its function is as follows. One of several proteins that assist in the late maturation steps of the functional core of the 30S ribosomal subunit. Associates with free 30S ribosomal subunits (but not with 30S subunits that are part of 70S ribosomes or polysomes). Required for efficient processing of 16S rRNA. May interact with the 5'-terminal helix region of 16S rRNA. The chain is Ribosome-binding factor A from Vibrio vulnificus (strain CMCP6).